The chain runs to 402 residues: Protein PMR5 (402 aa).

The chain crosses the membrane as a helical; Signal-anchor for type II membrane protein span at residues 7–23 (LLGISVVSAIFFLVLQQ). Positions 40 to 60 (GSSSGSSGNQYSSSRPSAGFQ) are disordered. A compositionally biased stretch (low complexity) spans 41–56 (SSSGSSGNQYSSSRPS). A GDS motif motif is present at residues 140-142 (GDS). Positions 379–393 (DCSHWCLPGLPDTWN) match the DCXHWCLPGXXDXWN motif motif.

It belongs to the PC-esterase family. TBL subfamily. As to expression, expressed in flowers, siliques, stems and leaves.

It localises to the membrane. Functionally, required for nonhost resistance (NHR) during plant-microbe interactions. Plants mutated in PMR5 are resistant to powdery mildew species. May act as a bridging protein that binds pectin and other cell wall polysaccharides. Probably involved in maintaining esterification of pectins. May be involved in the specific O-acetylation of cell wall polymers. The chain is Protein PMR5 (PMR5) from Arabidopsis thaliana (Mouse-ear cress).